Reading from the N-terminus, the 567-residue chain is Dihydroxy-acid dehydratase 1 (567 aa).

[2Fe-2S] cluster is bound at residue C57. D89 contacts Mg(2+). [2Fe-2S] cluster is bound at residue C130. The Mg(2+) site is built by D131 and K132. K132 carries the N6-carboxylysine modification. C202 serves as a coordination point for [2Fe-2S] cluster. Position 454 (E454) interacts with Mg(2+). S480 functions as the Proton acceptor in the catalytic mechanism.

This sequence belongs to the IlvD/Edd family. As to quaternary structure, homodimer. [2Fe-2S] cluster serves as cofactor. Requires Mg(2+) as cofactor.

It catalyses the reaction (2R)-2,3-dihydroxy-3-methylbutanoate = 3-methyl-2-oxobutanoate + H2O. The enzyme catalyses (2R,3R)-2,3-dihydroxy-3-methylpentanoate = (S)-3-methyl-2-oxopentanoate + H2O. It functions in the pathway amino-acid biosynthesis; L-isoleucine biosynthesis; L-isoleucine from 2-oxobutanoate: step 3/4. Its pathway is amino-acid biosynthesis; L-valine biosynthesis; L-valine from pyruvate: step 3/4. Its function is as follows. Functions in the biosynthesis of branched-chain amino acids. Catalyzes the dehydration of (2R,3R)-2,3-dihydroxy-3-methylpentanoate (2,3-dihydroxy-3-methylvalerate) into 2-oxo-3-methylpentanoate (2-oxo-3-methylvalerate) and of (2R)-2,3-dihydroxy-3-methylbutanoate (2,3-dihydroxyisovalerate) into 2-oxo-3-methylbutanoate (2-oxoisovalerate), the penultimate precursor to L-isoleucine and L-valine, respectively. The protein is Dihydroxy-acid dehydratase 1 of Aromatoleum aromaticum (strain DSM 19018 / LMG 30748 / EbN1) (Azoarcus sp. (strain EbN1)).